The chain runs to 478 residues: UDP-N-acetylmuramate--L-alanine ligase (478 aa).

Glycine 112–threonine 118 lines the ATP pocket.

This sequence belongs to the MurCDEF family.

The protein resides in the cytoplasm. It catalyses the reaction UDP-N-acetyl-alpha-D-muramate + L-alanine + ATP = UDP-N-acetyl-alpha-D-muramoyl-L-alanine + ADP + phosphate + H(+). The protein operates within cell wall biogenesis; peptidoglycan biosynthesis. Functionally, cell wall formation. This is UDP-N-acetylmuramate--L-alanine ligase from Polaromonas naphthalenivorans (strain CJ2).